The primary structure comprises 372 residues: MGILFEVLKQDSRTRARLGRLTTPHGVVETPVFMPVGTQATVKTMTPEEVRDLGARIILSNTYHLYLRPGHELVREAGGLHRFMHWNGPILTDSGGFQVFSLAPLRKLSDEGVEFRSHIDGSRHFFTPEKVVAVQEALGSDIAMVLDECAPYPCSYKDARTATERTTRWAARARAAWNSDGATALFGIIQGSVYRDLREESTRALVDLDFPGYGIGGLSVGEPKPLMYEALEWVIPLIPEDRPRYLMGVGSPDCLFEGIARGVDMFDCVLPTRMARHGAVFTHTGRLVVRNAPNARDFGPLDPGCTCYTCRHFSRAYVHHLLRAGEVLGIRLTTIHNLHFLLDLARRIREAIAEDRFHSLKEQFLAACLTPA.

D93 serves as the catalytic Proton acceptor. Substrate-binding positions include 93–97 (DSGGF), D147, Q190, and G217. The tract at residues 248-254 (GVGSPDC) is RNA binding. Catalysis depends on D267, which acts as the Nucleophile. Residues 272–276 (TRMAR) form an RNA binding; important for wobble base 34 recognition region. Zn(2+)-binding residues include C305, C307, C310, and H336.

It belongs to the queuine tRNA-ribosyltransferase family. In terms of assembly, homodimer. Within each dimer, one monomer is responsible for RNA recognition and catalysis, while the other monomer binds to the replacement base PreQ1. Zn(2+) is required as a cofactor.

The enzyme catalyses 7-aminomethyl-7-carbaguanine + guanosine(34) in tRNA = 7-aminomethyl-7-carbaguanosine(34) in tRNA + guanine. The protein operates within tRNA modification; tRNA-queuosine biosynthesis. In terms of biological role, catalyzes the base-exchange of a guanine (G) residue with the queuine precursor 7-aminomethyl-7-deazaguanine (PreQ1) at position 34 (anticodon wobble position) in tRNAs with GU(N) anticodons (tRNA-Asp, -Asn, -His and -Tyr). Catalysis occurs through a double-displacement mechanism. The nucleophile active site attacks the C1' of nucleotide 34 to detach the guanine base from the RNA, forming a covalent enzyme-RNA intermediate. The proton acceptor active site deprotonates the incoming PreQ1, allowing a nucleophilic attack on the C1' of the ribose to form the product. After dissociation, two additional enzymatic reactions on the tRNA convert PreQ1 to queuine (Q), resulting in the hypermodified nucleoside queuosine (7-(((4,5-cis-dihydroxy-2-cyclopenten-1-yl)amino)methyl)-7-deazaguanosine). In Desulforudis audaxviator (strain MP104C), this protein is Queuine tRNA-ribosyltransferase.